We begin with the raw amino-acid sequence, 92 residues long: Subtilisin inhibitor 1 (92 aa).

Over residues 1–12 (QEQGTNPSQEQN) the composition is skewed to polar residues. Residues 1 to 31 (QEQGTNPSQEQNVPLPRNYKQALETNTPTKT) are disordered.

The protein belongs to the protease inhibitor I13 (potato type I serine protease inhibitor) family.

Inhibitor of subtilisin. The sequence is that of Subtilisin inhibitor 1 from Phaseolus angularis (Azuki bean).